Consider the following 312-residue polypeptide: UDP-N-acetylenolpyruvoylglucosamine reductase (312 aa).

Residues 24 to 206 form the FAD-binding PCMH-type domain; the sequence is GIGGPADLFA…SADILKVRNE (183 aa). Arginine 166 is an active-site residue. Serine 217 acts as the Proton donor in catalysis. Residue glutamate 307 is part of the active site.

It belongs to the MurB family. FAD serves as cofactor.

The protein resides in the cytoplasm. The catalysed reaction is UDP-N-acetyl-alpha-D-muramate + NADP(+) = UDP-N-acetyl-3-O-(1-carboxyvinyl)-alpha-D-glucosamine + NADPH + H(+). The protein operates within cell wall biogenesis; peptidoglycan biosynthesis. In terms of biological role, cell wall formation. This chain is UDP-N-acetylenolpyruvoylglucosamine reductase, found in Solibacter usitatus (strain Ellin6076).